We begin with the raw amino-acid sequence, 299 residues long: Plant-type L-asparaginase (299 aa).

Catalysis depends on T169, which acts as the Nucleophile. Residues 197–200 and 220–223 contribute to the substrate site; these read RVGD and TGVG.

Belongs to the Ntn-hydrolase family. Heterotetramer of two alpha and two beta chains arranged as a dimer of alpha/beta heterodimers. The uncleaved protein forms homodimers. Post-translationally, autocleaved. Generates the alpha and beta subunits. The N-terminal residue of the beta subunit is thought to be responsible for the nucleophile hydrolase activity.

It carries out the reaction L-asparagine + H2O = L-aspartate + NH4(+). Its activity is regulated as follows. Divalent metal ions and EDTA do not have significant effect on enzyme activity, indicating that activity is metal-independent. Functionally, catalyzes the hydrolysis of L-asparagine into L-aspartate and ammonia. Also displays D-asparaginase activity, which is about 20% of the L-asparaginase activity. Does not exhibit glutaminase activity. In Pyrobaculum calidifontis (strain DSM 21063 / JCM 11548 / VA1), this protein is Plant-type L-asparaginase.